We begin with the raw amino-acid sequence, 268 residues long: Magnesium dechelatase SGR1, chloroplastic (268 aa).

Residues 1 to 48 (MCSLSAIMLLPTKLKPAYSDKRSNSSSSSSLFFNNRRSKKKNQSIVPV) constitute a chloroplast transit peptide.

The protein belongs to the staygreen family. As to quaternary structure, interacts with HCAR, the chlorophyll catabolic enzymes (CCEs) NYC1, PAO and RCCR, and the LHCII complex. Part of a SGR1-CCE-LHCII complex, which acts in chlorophyll breakdown. Expressed in roots, leaves, seeds, flowers, buds, petals, sepals and siliques.

It is found in the plastid. The protein resides in the chloroplast thylakoid membrane. The enzyme catalyses chlorophyll a + 2 H(+) = pheophytin a + Mg(2+). Functionally, magnesium chelatase involved in chlorophyll a degradation in the chlorophyll-protein complexes of photosystem I (PSI) and photosystem II (PSII). Contributes to the degradation of PSI and PSII in the thylakoid membranes. Required to trigger chlorophyll degradation during natural and dark-induced leaf senescence. Mediates chlorophyll degradation during embryo degreening. Recombinant SGR1 possesses high dechelating activity against chlorophyll a, very low activity against chlorophyllide a, and no activity against chlorophyll b. Magnesium dechelation of chlorophyll a by SGR1 activates chlorophyll b degradation by inducing the expression of NYC1, an enzyme involved in chlorophyll b degradation. This Arabidopsis thaliana (Mouse-ear cress) protein is Magnesium dechelatase SGR1, chloroplastic.